Here is a 384-residue protein sequence, read N- to C-terminus: MNKDGTVVLMNELASYASDPSKTRGRRHSEPPPENRTEFQRDRDRIIHSNAFRRLEYKTQVFVNHEGDLFRTRLTHSLEVAQIARTLARSLRVSEDLTEAIALAHDLGHTPFGHAGQDELNACMRELAPQAGGFEHNLQSLRVVDELEERYAEFNGLNLCFETREGILKHCSATHARQLGAVGERFLDRTQPSLEAQLANLADEVAYNNHDVDDGLRSGLITLEQLQEVGIFARHYAEVARRYPQLAPRRATSETIRRMINTLIVDLTATSLARIRDHAPASADDVRRAPPLAGFSAAVRREADELKKFLFDNLYRHYRVVRMTTKAQRIVRELFQAFLGDPRLLPPDYRREQPQDQARAISDYIAGMTDRYAIREHRRLFEMG.

Positions 13 to 42 (LASYASDPSKTRGRRHSEPPPENRTEFQRD) are disordered. Positions 28–42 (HSEPPPENRTEFQRD) are enriched in basic and acidic residues. An HD domain is found at 73–208 (RLTHSLEVAQ…ANLADEVAYN (136 aa)).

The protein belongs to the dGTPase family. Type 2 subfamily.

The sequence is that of Deoxyguanosinetriphosphate triphosphohydrolase-like protein from Bordetella bronchiseptica (strain ATCC BAA-588 / NCTC 13252 / RB50) (Alcaligenes bronchisepticus).